A 555-amino-acid polypeptide reads, in one-letter code: Urocanate hydratase (555 aa).

NAD(+) is bound by residues 52–53 (GG), Gln-130, 176–178 (GMG), Glu-196, Arg-201, 242–243 (NA), 263–267 (QTSAH), 273–274 (YL), and Tyr-322. The active site involves Cys-410. Gly-492 provides a ligand contact to NAD(+).

Belongs to the urocanase family. The cofactor is NAD(+).

Its subcellular location is the cytoplasm. The catalysed reaction is 4-imidazolone-5-propanoate = trans-urocanate + H2O. It functions in the pathway amino-acid degradation; L-histidine degradation into L-glutamate; N-formimidoyl-L-glutamate from L-histidine: step 2/3. Its function is as follows. Catalyzes the conversion of urocanate to 4-imidazolone-5-propionate. The protein is Urocanate hydratase of Shewanella baltica (strain OS195).